A 738-amino-acid chain; its full sequence is MEACNCIEPQWPADELLMKYQYISDFFIALAYFSIPLELIYFVKKSAVFPYRWVLVQFGAFIVLCGATHLINLWTFSMHSRTVAIVMTTAKVLTAVVSCATALMLVHIIPDLLSVKTRELFLKNKAAELDREMGLIRTQEETGRHVRMLTHEIRSTLDRHTILKTTLVELGRTLALEECALWMPTRTGLELQLSYTLRQQNPVGYTVPIHLPVINQVFSSNRALKISPNSPVARMRPLAGKHMPGEVVAVRVPLLHLSNFQINDWPELSTKRYALMVLMLPSDSARQWHVHELELVEVVADQVAVALSHAAILEESMRARDLLMEQNIALDLARREAETAIRARNDFLAVMNHEMRTPMHAIIALSSLLQETELTPEQRLMVETILKSSHLLATLINDVLDLSRLEDGSLQLEIATFNLHSVFREVHNLIKPVASVKKLSVSLNLAADLPVQAVGDEKRLMQIVLNVVGNAVKFSKEGSISITAFVAKSESLRDFRAPEFFPAQSDNHFYLRVQVKDSGSGINPQDIPKLFTKFAQTQSLATRNSGGSGLGLAICKRFVNLMEGHIWIESEGPGKGCTAIFIVKLGFAERSNESKLPFLTKVQANHVQTNFPGLKVLVMDDNGSVTKGLLVHLGCDVTTVSSIDEFLHVISQEHKVVFMDVCMPGIDGYELAVRIHEKFTKRHERPVLVALTGNIDKMTKENCMRVGMDGVILKPVSVDKMRSVLSELLEHRVLFEAM.

The next 3 membrane-spanning stretches (helical) occupy residues 23–43 (ISDF…IYFV), 54–74 (VLVQ…INLW), and 92–112 (VLTA…IPDL). 2 residues coordinate Cu cation: Cys-65 and His-69. The GAF domain occupies 158–307 (DRHTILKTTL…VVADQVAVAL (150 aa)). The Histidine kinase domain occupies 350 to 589 (VMNHEMRTPM…IFIVKLGFAE (240 aa)). Residue His-353 is modified to Phosphohistidine; by autocatalysis. One can recognise a Response regulatory domain in the interval 612 to 729 (PGLKVLVMDD…KMRSVLSELL (118 aa)). The residue at position 660 (Asp-660) is a 4-aspartylphosphate.

It belongs to the ethylene receptor family. In terms of assembly, homodimer; disulfide-linked. Cu cation serves as cofactor. Activation probably requires a transfer of a phosphate group between a His in the transmitter domain and an Asp of the receiver domain.

The protein resides in the endoplasmic reticulum membrane. It carries out the reaction ATP + protein L-histidine = ADP + protein N-phospho-L-histidine.. In terms of biological role, may act early in the ethylene signal transduction pathway, possibly as an ethylene receptor, or as a regulator of the pathway. The sequence is that of Ethylene receptor (ETR1) from Prunus persica (Peach).